We begin with the raw amino-acid sequence, 209 residues long: Chloramphenicol acetyltransferase (209 aa).

His78 is a catalytic residue.

Belongs to the transferase hexapeptide repeat family.

The enzyme catalyses chloramphenicol + acetyl-CoA = chloramphenicol 3-acetate + CoA. Its function is as follows. This enzyme is an effector of chloramphenicol resistance in bacteria. This is Chloramphenicol acetyltransferase (cat) from Agrobacterium fabrum (strain C58 / ATCC 33970) (Agrobacterium tumefaciens (strain C58)).